A 73-amino-acid polypeptide reads, in one-letter code: Putative antitoxin VapB21 (73 aa).

The protein belongs to the UPF0330 family.

Possibly the antitoxin component of a type II toxin-antitoxin (TA) system. Its cognate toxin is VapC21 (Potential). The chain is Putative antitoxin VapB21 (vapB21) from Sulfurisphaera tokodaii (strain DSM 16993 / JCM 10545 / NBRC 100140 / 7) (Sulfolobus tokodaii).